We begin with the raw amino-acid sequence, 140 residues long: Non-specific lipid transfer protein GPI-anchored 33 (140 aa).

An N-terminal signal peptide occupies residues 1 to 27; sequence MAYTNKVTISAAVATMMLFLAVTIVDA. Intrachain disulfides connect cysteine 40–cysteine 80, cysteine 52–cysteine 64, cysteine 65–cysteine 104, and cysteine 78–cysteine 112. Residue asparagine 91 is glycosylated (N-linked (GlcNAc...) asparagine). Glycine 115 carries the GPI-anchor amidated glycine lipid modification. The propeptide at 116–140 is removed in mature form; it reads DASGGSTNKIAASMVLLGLVASLFF.

The protein belongs to the plant LTP family.

It is found in the cell membrane. Probable lipid transfer protein. This is Non-specific lipid transfer protein GPI-anchored 33 from Arabidopsis thaliana (Mouse-ear cress).